The chain runs to 478 residues: E3 ubiquitin-protein ligase makorin-1 (478 aa).

3 consecutive C3H1-type zinc fingers follow at residues 51 to 78 (WTKQ…HDLS), 80 to 107 (SQSA…HTKP), and 204 to 231 (EMKK…HGDA). A makorin-type Cys-His region spans residues 232–259 (CDMCGLQVLHPVDAAQRSQHIKSCIEAH). The RING-type zinc finger occupies 277–331 (CGICMEVVYEKANPSERRFGILSNCNHTYCLKCIRKWRSAKQFESKIIKSCPECR). A C3H1-type 4 zinc finger spans residues 360–389 (AMSNKPCRYFDEGRGSCPFGGNCFYKHAYP).

Interacts with p53/TP53 and CDKN1A. Interacts with TERT, modulating telomere length homeostasis. Auto-ubiquitinated; which leads to proteasomal degradation.

The catalysed reaction is S-ubiquitinyl-[E2 ubiquitin-conjugating enzyme]-L-cysteine + [acceptor protein]-L-lysine = [E2 ubiquitin-conjugating enzyme]-L-cysteine + N(6)-ubiquitinyl-[acceptor protein]-L-lysine.. Its pathway is protein modification; protein ubiquitination. E3 ubiquitin ligase catalyzing the covalent attachment of ubiquitin moieties onto substrate proteins. These substrates include FILIP1, p53/TP53, CDKN1A and TERT. Keeps cells alive by suppressing p53/TP53 under normal conditions, but stimulates apoptosis by repressing CDKN1A under stress conditions. Acts as a negative regulator of telomerase. Has negative and positive effects on RNA polymerase II-dependent transcription. The chain is E3 ubiquitin-protein ligase makorin-1 (MKRN1) from Notamacropus eugenii (Tammar wallaby).